A 211-amino-acid chain; its full sequence is Proteasome subunit beta 2 (211 aa).

The propeptide at 1–17 (MVIMGNELQLENKILKG) is removed in mature form; by autocatalysis. The active-site Nucleophile is the threonine 18.

The protein belongs to the peptidase T1B family. The 20S proteasome core is composed of 14 alpha and 14 beta subunits that assemble into four stacked heptameric rings, resulting in a barrel-shaped structure. The two inner rings, each composed of seven catalytic beta subunits, are sandwiched by two outer rings, each composed of seven alpha subunits. The catalytic chamber with the active sites is on the inside of the barrel. Has a gated structure, the ends of the cylinder being occluded by the N-termini of the alpha-subunits. Is capped at one or both ends by the proteasome regulatory ATPase, PAN.

It localises to the cytoplasm. The catalysed reaction is Cleavage of peptide bonds with very broad specificity.. Its activity is regulated as follows. The formation of the proteasomal ATPase PAN-20S proteasome complex, via the docking of the C-termini of PAN into the intersubunit pockets in the alpha-rings, triggers opening of the gate for substrate entry. Interconversion between the open-gate and close-gate conformations leads to a dynamic regulation of the 20S proteasome proteolysis activity. Functionally, component of the proteasome core, a large protease complex with broad specificity involved in protein degradation. The chain is Proteasome subunit beta 2 from Saccharolobus solfataricus (strain 98/2) (Sulfolobus solfataricus).